The following is a 1267-amino-acid chain: Eukaryotic translation initiation factor 3 subunit A (1267 aa).

Positions 82 to 118 (NIKSLEDVVRAYLKLAEEKTETAKEESQQMVLDIEDL) form a coiled coil. One can recognise a PCI domain in the interval 315–498 (MQRMSTRVLL…RTLSFGSDLN (184 aa)). Basic and acidic residues-rich tracts occupy residues 792–835 (EERK…LEQE), 844–1086 (YQER…DSRP), and 1098–1147 (WRER…EGSA). Residues 792–1267 (EERKKQRKED…DDDGWTTVRR (476 aa)) are disordered. A run of 3 repeats spans residues 956-965 (DDDRGPRRGG), 966-975 (DDERPPRRGF), and 976-985 (DDDRGTRRGF). A 12 X 10 AA approximate tandem repeats of D-[DE]-[DE]-R-[GP]-[GPQT]-R-R-[GPS]-[ADFGIM] region spans residues 956–1073 (DDDRGPRRGG…DDERGGRRGM (118 aa)). One copy of the 4; truncated repeat lies at 986–994 (DDDRGQRRG). 2 tandem repeats follow at residues 995–1004 (DDDRGPRRGM) and 1005–1014 (DDDRGPRRPI). The stretch at 1015-1023 (DDDRGPRRS) is one 7; truncated repeat. A run of 2 repeats spans residues 1024-1033 (DDDRGPRRGF) and 1034-1043 (DDDRGPRRGM). A 10; approximate repeat occupies 1044–1053 (DEPRGPRRGA). Residues 1054-1063 (DDDWGPRRGG) form repeat 11. One copy of the 12; approximate repeat lies at 1064 to 1073 (DDERGGRRGM). The span at 1150 to 1159 (RGGGGGGGGE) shows a compositional bias: gly residues. Residues 1162–1256 (SSWRDSRRED…KENPRRTKNE (95 aa)) show a composition bias toward basic and acidic residues.

It belongs to the eIF-3 subunit A family. Component of the eukaryotic translation initiation factor 3 (eIF-3) complex, which is composed of 13 subunits: eif3a, eif3b, eif3c, eif3d, eif3e, eif3f, eif3g, eif3h, eif3i, eif3j, eif3k, eif3l and eif3m.

Its subcellular location is the cytoplasm. Its function is as follows. RNA-binding component of the eukaryotic translation initiation factor 3 (eIF-3) complex, which is involved in protein synthesis of a specialized repertoire of mRNAs and, together with other initiation factors, stimulates binding of mRNA and methionyl-tRNAi to the 40S ribosome. The eIF-3 complex specifically targets and initiates translation of a subset of mRNAs involved in cell proliferation. In Danio rerio (Zebrafish), this protein is Eukaryotic translation initiation factor 3 subunit A (eif3a).